Reading from the N-terminus, the 103-residue chain is NADH-quinone oxidoreductase subunit K (103 aa).

The next 3 helical transmembrane spans lie at 6 to 26 (LAHY…GIFL), 32 to 52 (IVLL…FVAF), and 63 to 83 (VFVF…LAIL).

This sequence belongs to the complex I subunit 4L family. NDH-1 is composed of 14 different subunits. Subunits NuoA, H, J, K, L, M, N constitute the membrane sector of the complex.

Its subcellular location is the cell inner membrane. It carries out the reaction a quinone + NADH + 5 H(+)(in) = a quinol + NAD(+) + 4 H(+)(out). In terms of biological role, NDH-1 shuttles electrons from NADH, via FMN and iron-sulfur (Fe-S) centers, to quinones in the respiratory chain. The immediate electron acceptor for the enzyme in this species is believed to be ubiquinone. Couples the redox reaction to proton translocation (for every two electrons transferred, four hydrogen ions are translocated across the cytoplasmic membrane), and thus conserves the redox energy in a proton gradient. This chain is NADH-quinone oxidoreductase subunit K, found in Ralstonia pickettii (strain 12D).